The primary structure comprises 405 residues: CCA-adding enzyme (405 aa).

ATP-binding residues include G8 and R11. CTP contacts are provided by G8 and R11. Mg(2+) contacts are provided by E21 and D23. R91, R137, and R140 together coordinate ATP. CTP contacts are provided by R91, R137, and R140. Residues 220–326 (PLSHGLSTLS…LNFFDELDLW (107 aa)) enclose the HD domain.

Belongs to the tRNA nucleotidyltransferase/poly(A) polymerase family. Bacterial CCA-adding enzyme type 2 subfamily. Mg(2+) is required as a cofactor.

The enzyme catalyses a tRNA precursor + 2 CTP + ATP = a tRNA with a 3' CCA end + 3 diphosphate. The catalysed reaction is a tRNA with a 3' CCA end + 2 CTP + ATP = a tRNA with a 3' CCACCA end + 3 diphosphate. Catalyzes the addition and repair of the essential 3'-terminal CCA sequence in tRNAs without using a nucleic acid template. Adds these three nucleotides in the order of C, C, and A to the tRNA nucleotide-73, using CTP and ATP as substrates and producing inorganic pyrophosphate. tRNA 3'-terminal CCA addition is required both for tRNA processing and repair. Also involved in tRNA surveillance by mediating tandem CCA addition to generate a CCACCA at the 3' terminus of unstable tRNAs. While stable tRNAs receive only 3'-terminal CCA, unstable tRNAs are marked with CCACCA and rapidly degraded. The polypeptide is CCA-adding enzyme (Hamiltonella defensa subsp. Acyrthosiphon pisum (strain 5AT)).